The following is a 106-amino-acid chain: A-type ATP synthase subunit F (106 aa).

This sequence belongs to the V-ATPase F subunit family. Has multiple subunits with at least A(3), B(3), C, D, E, F, H, I and proteolipid K(x).

Its subcellular location is the cell membrane. Its function is as follows. Component of the A-type ATP synthase that produces ATP from ADP in the presence of a proton gradient across the membrane. This Haloferax volcanii (strain ATCC 29605 / DSM 3757 / JCM 8879 / NBRC 14742 / NCIMB 2012 / VKM B-1768 / DS2) (Halobacterium volcanii) protein is A-type ATP synthase subunit F.